Here is a 284-residue protein sequence, read N- to C-terminus: Pseudouridine-5'-phosphate glycosidase (284 aa).

The active-site Proton donor is Glu8. 2 residues coordinate substrate: Lys69 and Val89. Asp119 lines the Mn(2+) pocket. Residue 121 to 123 (SQD) coordinates substrate. Lys140 functions as the Nucleophile in the catalytic mechanism.

This sequence belongs to the pseudouridine-5'-phosphate glycosidase family. As to quaternary structure, homotrimer. Mn(2+) is required as a cofactor.

It carries out the reaction D-ribose 5-phosphate + uracil = psi-UMP + H2O. In terms of biological role, catalyzes the reversible cleavage of pseudouridine 5'-phosphate (PsiMP) to ribose 5-phosphate and uracil. Functions biologically in the cleavage direction, as part of a pseudouridine degradation pathway. The chain is Pseudouridine-5'-phosphate glycosidase from Pseudothermotoga lettingae (strain ATCC BAA-301 / DSM 14385 / NBRC 107922 / TMO) (Thermotoga lettingae).